The sequence spans 310 residues: uncharacterized protein (310 aa).

5 helical membrane passes run 10-30 (AVLS…AYAI), 44-64 (TVNL…ATPA), 78-98 (FSSG…GYSA), 113-133 (LGIA…WILW), and 161-181 (VVVA…PLIA). The span at 285 to 297 (PLEDPKSWQHPDE) shows a compositional bias: basic and acidic residues. The interval 285-310 (PLEDPKSWQHPDEFPPSAPLNRDKPN) is disordered.

The protein belongs to the cation diffusion facilitator (CDF) transporter (TC 2.A.4) family.

It localises to the cell membrane. This is an uncharacterized protein from Synechocystis sp. (strain ATCC 27184 / PCC 6803 / Kazusa).